The sequence spans 355 residues: Olfactory receptor 1I1 (355 aa).

The Extracellular segment spans residues 1–25 (MEPEKQTEISEFFLQGLSEKPEHQT). Residues 26–49 (LLFTMFLSTYLVTIIGNALIILAI) traverse the membrane as a helical segment. The Cytoplasmic portion of the chain corresponds to 50 to 57 (ITDSHLHT). The chain crosses the membrane as a helical span at residues 58 to 79 (PMYFFLFNLSLVDTLLSSTTVP). At 80-100 (KMLANIQAQSRAIPFVGCLTQ) the chain is on the extracellular side. A helical transmembrane segment spans residues 101–120 (MYAFHLFGTMDSFLLAVMAI). Topologically, residues 121–139 (DRFVAIVHPQRYLVLMCSP) are cytoplasmic. A helical transmembrane segment spans residues 140–158 (VCGLLLGASWMITNLQSLI). At 159 to 195 (HTCLMAQLTFCAGSEISHFFCDLMPLLKLSGSDTHTN) the chain is on the extracellular side. A helical transmembrane segment spans residues 196–219 (ELVIFAFGIVVGTSPFSCILLSYI). The Cytoplasmic segment spans residues 220-236 (RIFWTVFKIPSTRGKWK). The helical transmembrane segment at 237–259 (AFSTCGLHLTVVSLSYGTIFAVY) threads the bilayer. Topologically, residues 260–272 (LQPTSPSSSQKDK) are extracellular. Residues 273 to 292 (AAALMCGVFIPMLNPFIYSI) traverse the membrane as a helical segment. At 293-355 (RNKDMKAALG…QSLAGNRDME (63 aa)) the chain is on the cytoplasmic side.

This sequence belongs to the G-protein coupled receptor 1 family.

The protein localises to the cell membrane. Odorant receptor. This is Olfactory receptor 1I1 (OR1I1) from Homo sapiens (Human).